The primary structure comprises 175 residues: Pancreatic beta cell growth factor (175 aa).

The signal sequence occupies residues 1 to 26; the sequence is MMLPMTLCRMSWMLLSCLMFLSWVEG. The region spanning 38–175 is the C-type lectin domain; the sequence is ITCPQGSVAY…ELPYICKFKV (138 aa). Disulfide bonds link C40-C51, C68-C171, and C146-C163.

As to expression, expressed only in CW animals pancreas and to a lesser extent in duodenum. In pancreas it is found in acinar cells, but not in islets.

The protein resides in the secreted. In terms of biological role, constituent of ilotropin, which is a partially purified preparation of cellophane wrapping (CW) pancreata. Capable of initiating duct cell proliferation, a prerequisite for islet neogenesis. The polypeptide is Pancreatic beta cell growth factor (INGAP) (Mesocricetus auratus (Golden hamster)).